Consider the following 78-residue polypeptide: Acyl carrier protein (78 aa).

Residues 2–77 form the Carrier domain; sequence SDTADRVQKI…DATKYIEEHK (76 aa). O-(pantetheine 4'-phosphoryl)serine is present on serine 37.

It belongs to the acyl carrier protein (ACP) family. 4'-phosphopantetheine is transferred from CoA to a specific serine of apo-ACP by AcpS. This modification is essential for activity because fatty acids are bound in thioester linkage to the sulfhydryl of the prosthetic group.

It is found in the cytoplasm. It participates in lipid metabolism; fatty acid biosynthesis. Carrier of the growing fatty acid chain in fatty acid biosynthesis. In Erythrobacter litoralis (strain HTCC2594), this protein is Acyl carrier protein.